An 89-amino-acid polypeptide reads, in one-letter code: DNA-directed RNA polymerase subunit omega (89 aa).

The protein belongs to the RNA polymerase subunit omega family. In terms of assembly, the RNAP catalytic core consists of 2 alpha, 1 beta, 1 beta' and 1 omega subunit. When a sigma factor is associated with the core the holoenzyme is formed, which can initiate transcription.

It carries out the reaction RNA(n) + a ribonucleoside 5'-triphosphate = RNA(n+1) + diphosphate. Its function is as follows. Promotes RNA polymerase assembly. Latches the N- and C-terminal regions of the beta' subunit thereby facilitating its interaction with the beta and alpha subunits. This is DNA-directed RNA polymerase subunit omega from Clavibacter michiganensis subsp. michiganensis (strain NCPPB 382).